Reading from the N-terminus, the 505-residue chain is MTHPSDTGPAPVLALEDISKSFGAVRALRDVSLELFPGEVHALAGENGAGKSTLIKTLAGVHRPDAGQVLLDGRPTVFHGPADARDAGIAVIYQEPTLFPDLSIAENIYMGRRPRRSFGRIDHKATRAATAALMRRLGVELDPERPARGLSIADQQIVEIAKALSFDARVLIMDEPTAALTGSEVARLFGVVRTLREQGAAVLFISHRLEEIFQICQRVTTLRDGALISSEPLDGMTEDDLVRRMVGRDLDELYPKQEVRAGEVAMSVRRLTREGVFTDVSFDVRRGEIVGLAGLVGAGRTEVARAVFGIDRWDAGEVEVEGRRLTNGAPSTAMAAGLALVPEDRRAQGLVMNMSIERNIGLTGLRTTVRAGLVDRGAERSRSLDWAAKLQVKYARIADAVSTLSGGNQQKVVLAKWLATGPRVLIVDEPTRGIDVGTKAEVHRLLSALAADGVAVLMISSDLPEILGMADRVLVMHEGRVTAEIPRSEATEESVMAAATGRAAA.

ABC transporter domains lie at 13–249 and 259–503; these read LALE…VGRD and VRAG…TGRA. An ATP-binding site is contributed by 45–52; it reads GENGAGKS.

Belongs to the ABC transporter superfamily. Ribose importer (TC 3.A.1.2.1) family. As to quaternary structure, the complex is composed of an ATP-binding protein (RbsA), two transmembrane proteins (RbsC) and a solute-binding protein (RbsB).

The protein localises to the cell membrane. It carries out the reaction D-ribose(out) + ATP + H2O = D-ribose(in) + ADP + phosphate + H(+). Its function is as follows. Part of the ABC transporter complex RbsABC involved in ribose import. Responsible for energy coupling to the transport system. The chain is Ribose import ATP-binding protein RbsA 2 from Streptomyces avermitilis (strain ATCC 31267 / DSM 46492 / JCM 5070 / NBRC 14893 / NCIMB 12804 / NRRL 8165 / MA-4680).